The sequence spans 161 residues: 2-C-methyl-D-erythritol 2,4-cyclodiphosphate synthase (161 aa).

The a divalent metal cation site is built by D11 and H13. Residues 11 to 13 (DIH) and 37 to 38 (HS) contribute to the 4-CDP-2-C-methyl-D-erythritol 2-phosphate site. H45 serves as a coordination point for a divalent metal cation. Residues 59–61 (DIG), 135–138 (TTNE), and R145 each bind 4-CDP-2-C-methyl-D-erythritol 2-phosphate.

Belongs to the IspF family. As to quaternary structure, homotrimer. The cofactor is a divalent metal cation.

The enzyme catalyses 4-CDP-2-C-methyl-D-erythritol 2-phosphate = 2-C-methyl-D-erythritol 2,4-cyclic diphosphate + CMP. The protein operates within isoprenoid biosynthesis; isopentenyl diphosphate biosynthesis via DXP pathway; isopentenyl diphosphate from 1-deoxy-D-xylulose 5-phosphate: step 4/6. Involved in the biosynthesis of isopentenyl diphosphate (IPP) and dimethylallyl diphosphate (DMAPP), two major building blocks of isoprenoid compounds. Catalyzes the conversion of 4-diphosphocytidyl-2-C-methyl-D-erythritol 2-phosphate (CDP-ME2P) to 2-C-methyl-D-erythritol 2,4-cyclodiphosphate (ME-CPP) with a corresponding release of cytidine 5-monophosphate (CMP). The chain is 2-C-methyl-D-erythritol 2,4-cyclodiphosphate synthase from Thermosynechococcus vestitus (strain NIES-2133 / IAM M-273 / BP-1).